The chain runs to 385 residues: Cellulase CelDZ1 (385 aa).

A helical membrane pass occupies residues 6 to 26; it reads INKWYFFVGMLVIFAVIISLI. Substrate-binding positions include histidine 87, 91–92, tyrosine 118, and histidine 153; that span reads WF. The Proton donor role is filled by glutamate 192. A substrate-binding site is contributed by tyrosine 261. Glutamate 294 acts as the Nucleophile in catalysis. Substrate-binding positions include 300 to 301, tryptophan 328, and 333 to 335; these read AS and KNE.

Belongs to the glycosyl hydrolase 5 (cellulase A) family. Monomer.

The protein resides in the cell membrane. It carries out the reaction Endohydrolysis of (1-&gt;4)-beta-D-glucosidic linkages in cellulose, lichenin and cereal beta-D-glucans.. Activity is enhanced by 1mM Mn(2+), but is not affected by 1mM Ca(2+), Mg(2+), Zn(2+), K(+), Na(+) or Li(+). Activity is not inhibited by EDTA (in vitro). Thermostable endoglucanase that has high activity with soluble polymeric substrates containing beta-1,4-glycosidic bonds, such as carboxymethyl cellulose (CMC) and barley beta-D-glucan (in vitro). Has no activity with cellobiose and filter paper. Has no activity with substrates containing beta-1,3-linked glycans, such as laminarin. Likewise, lacks activity with xylan, galactomannan and pectin. The sequence is that of Cellulase CelDZ1 from Thermoanaerobacterium sp.